A 395-amino-acid chain; its full sequence is Argininosuccinate synthase (395 aa).

Position 8-16 (8-16) interacts with ATP; it reads AYSGGLDTS. Residues Tyr-86 and Ser-91 each coordinate L-citrulline. Position 116 (Gly-116) interacts with ATP. L-aspartate is bound by residues Thr-118, Asn-122, and Asp-123. An L-citrulline-binding site is contributed by Asn-122. L-citrulline contacts are provided by Arg-126, Ser-172, Ser-181, Glu-257, and Tyr-269.

Belongs to the argininosuccinate synthase family. Type 1 subfamily. As to quaternary structure, homotetramer.

The protein localises to the cytoplasm. The enzyme catalyses L-citrulline + L-aspartate + ATP = 2-(N(omega)-L-arginino)succinate + AMP + diphosphate + H(+). Its pathway is amino-acid biosynthesis; L-arginine biosynthesis; L-arginine from L-ornithine and carbamoyl phosphate: step 2/3. The chain is Argininosuccinate synthase from Methanosarcina barkeri (strain Fusaro / DSM 804).